A 233-amino-acid polypeptide reads, in one-letter code: Nickel import system ATP-binding protein NikE (233 aa).

The ABC transporter domain maps to 2–228 (IELKHVTFGY…DRHPYTKELV (227 aa)). Residue 35 to 42 (GESGCGKS) participates in ATP binding.

This sequence belongs to the ABC transporter superfamily. The complex is composed of two ATP-binding proteins (NikD and NikE), two transmembrane proteins (NikB and NikC) and a solute-binding protein (NikA).

The protein localises to the cell membrane. The enzyme catalyses Ni(2+)(out) + ATP + H2O = Ni(2+)(in) + ADP + phosphate + H(+). Functionally, part of the ABC transporter complex NikABCDE (Opp2) involved in nickel import. Probably responsible for energy coupling to the transport system. The chain is Nickel import system ATP-binding protein NikE from Staphylococcus aureus (strain Mu50 / ATCC 700699).